The chain runs to 309 residues: Porphobilinogen deaminase (309 aa).

S-(dipyrrolylmethanemethyl)cysteine is present on Cys244.

Belongs to the HMBS family. In terms of assembly, monomer. Dipyrromethane is required as a cofactor.

The catalysed reaction is 4 porphobilinogen + H2O = hydroxymethylbilane + 4 NH4(+). It participates in porphyrin-containing compound metabolism; protoporphyrin-IX biosynthesis; coproporphyrinogen-III from 5-aminolevulinate: step 2/4. Its function is as follows. Tetrapolymerization of the monopyrrole PBG into the hydroxymethylbilane pre-uroporphyrinogen in several discrete steps. The sequence is that of Porphobilinogen deaminase from Agrobacterium fabrum (strain C58 / ATCC 33970) (Agrobacterium tumefaciens (strain C58)).